Reading from the N-terminus, the 226-residue chain is Exosome complex component Rrp4 (226 aa).

Positions 61–135 (NDLVIGKVNS…RDPLVSISDR (75 aa)) constitute an S1 motif domain. In terms of domain architecture, KH spans 141–200 (DSGVLMEISPSKVPRLIGKKGSMIQMIEEATDAAVTIGQNGWVVVSCESPEGLLKAKKAI).

Belongs to the RRP4 family. Component of the archaeal exosome complex. Forms a trimer of Rrp4 and/or Csl4 subunits. The trimer associates with a hexameric ring-like arrangement composed of 3 Rrp41-Rrp42 heterodimers.

The protein resides in the cytoplasm. Non-catalytic component of the exosome, which is a complex involved in RNA degradation. Increases the RNA binding and the efficiency of RNA degradation. Confers strong poly(A) specificity to the exosome. The chain is Exosome complex component Rrp4 from Nitrosopumilus maritimus (strain SCM1).